Consider the following 269-residue polypeptide: Formamidopyrimidine-DNA glycosylase (269 aa).

The Schiff-base intermediate with DNA role is filled by Pro-2. Glu-3 serves as the catalytic Proton donor. Lys-57 (proton donor; for beta-elimination activity) is an active-site residue. Positions 90, 109, and 150 each coordinate DNA. An FPG-type zinc finger spans residues 235–269 (QVYGKGGLPCPKCGTELAEVKIGQRATVYCSQCQQ). The active-site Proton donor; for delta-elimination activity is the Arg-259.

This sequence belongs to the FPG family. In terms of assembly, monomer. Requires Zn(2+) as cofactor.

The enzyme catalyses Hydrolysis of DNA containing ring-opened 7-methylguanine residues, releasing 2,6-diamino-4-hydroxy-5-(N-methyl)formamidopyrimidine.. It catalyses the reaction 2'-deoxyribonucleotide-(2'-deoxyribose 5'-phosphate)-2'-deoxyribonucleotide-DNA = a 3'-end 2'-deoxyribonucleotide-(2,3-dehydro-2,3-deoxyribose 5'-phosphate)-DNA + a 5'-end 5'-phospho-2'-deoxyribonucleoside-DNA + H(+). Functionally, involved in base excision repair of DNA damaged by oxidation or by mutagenic agents. Acts as a DNA glycosylase that recognizes and removes damaged bases. Has a preference for oxidized purines, such as 7,8-dihydro-8-oxoguanine (8-oxoG). Has AP (apurinic/apyrimidinic) lyase activity and introduces nicks in the DNA strand. Cleaves the DNA backbone by beta-delta elimination to generate a single-strand break at the site of the removed base with both 3'- and 5'-phosphates. The chain is Formamidopyrimidine-DNA glycosylase from Photobacterium damsela subsp. piscicida (Pasteurella piscicida).